A 30-amino-acid polypeptide reads, in one-letter code: Cycloviolacin-O24 (30 aa).

Residues Gly-1–Asn-30 constitute a cross-link (cyclopeptide (Gly-Asn)). 3 disulfides stabilise this stretch: Cys-5/Cys-19, Cys-9/Cys-21, and Cys-14/Cys-27.

This is a cyclic peptide. As to expression, expressed in leaves but not in petals, petioles, roots and runners (at protein level).

In terms of biological role, probably participates in a plant defense mechanism. Has hemolytic activity. This chain is Cycloviolacin-O24, found in Viola odorata (Sweet violet).